We begin with the raw amino-acid sequence, 752 residues long: Lid2 complex component jmj3 (752 aa).

Residues 34–75 enclose the JmjN domain; sequence IPVVEPKISEFVDMESFIRRVERLGKKYGAIKVVRPSSVLNP. A JmjC domain is found at 162–333; that stretch reads YTNRPSIPFY…NYEFSNLRRL (172 aa). 2 stretches are compositionally biased toward polar residues: residues 391–402 and 409–423; these read SFSQRDFDSPNS and LMSN…HFNS. Residues 391 to 438 are disordered; sequence SFSQRDFDSPNSINPPSPLMSNHESASTEHFNSTTTTEKELSSLHVGE. Residues 427-438 show a composition bias toward basic and acidic residues; that stretch reads TEKELSSLHVGE.

As to quaternary structure, component of the Lid2 complex composed of ash2, jmj3, lid2, sdc1 and snt2.

The protein resides in the nucleus. This is Lid2 complex component jmj3 from Schizosaccharomyces pombe (strain 972 / ATCC 24843) (Fission yeast).